We begin with the raw amino-acid sequence, 630 residues long: DNA mismatch repair protein MutL (630 aa).

Disordered regions lie at residues 361–386 (VLSS…APAE) and 407–431 (FERK…GQAE). Basic and acidic residues predominate over residues 407 to 421 (FERKQEEEVGEERCS).

Belongs to the DNA mismatch repair MutL/HexB family.

This protein is involved in the repair of mismatches in DNA. It is required for dam-dependent methyl-directed DNA mismatch repair. May act as a 'molecular matchmaker', a protein that promotes the formation of a stable complex between two or more DNA-binding proteins in an ATP-dependent manner without itself being part of a final effector complex. The chain is DNA mismatch repair protein MutL from Geobacillus kaustophilus (strain HTA426).